A 112-amino-acid chain; its full sequence is UPF0212 protein Mhun_0078 (112 aa).

The protein belongs to the UPF0212 family.

This chain is UPF0212 protein Mhun_0078, found in Methanospirillum hungatei JF-1 (strain ATCC 27890 / DSM 864 / NBRC 100397 / JF-1).